The chain runs to 604 residues: Pescadillo homolog (604 aa).

Residues 275–299 (NSEPAGLIEDKEGEDNKESSKTDES) are disordered. Positions 282–299 (IEDKEGEDNKESSKTDES) are enriched in basic and acidic residues. The BRCT domain occupies 337–427 (ECRSLFKNLK…IILPTEGYIV (91 aa)). Disordered stretches follow at residues 518–557 (KTFSNRTADNQPDVVDKSDTKEADDHMEDSHKQAEKDAAD) and 574–604 (IEINQERKKDKVNLLKKRKKNADSSASAKGR). Composition is skewed to basic and acidic residues over residues 531 to 557 (VVDKSDTKEADDHMEDSHKQAEKDAAD) and 577 to 586 (NQERKKDKVN).

This sequence belongs to the pescadillo family.

It localises to the nucleus. It is found in the nucleolus. The protein localises to the nucleoplasm. Its function is as follows. Required for maturation of ribosomal RNAs and formation of the large ribosomal subunit. The polypeptide is Pescadillo homolog (PES) (Oryza sativa subsp. japonica (Rice)).